Reading from the N-terminus, the 669-residue chain is DNA ligase (669 aa).

NAD(+)-binding positions include 31 to 35 (DSVYD), 80 to 81 (SL), and E112. The active-site N6-AMP-lysine intermediate is the K114. NAD(+) contacts are provided by R135, E172, K289, and K313. The Zn(2+) site is built by C407, C410, C425, and C430. The region spanning 591-669 (TDSGKLKGKT…EAEFLQLLEP (79 aa)) is the BRCT domain.

It belongs to the NAD-dependent DNA ligase family. LigA subfamily. The cofactor is Mg(2+). Mn(2+) serves as cofactor.

The catalysed reaction is NAD(+) + (deoxyribonucleotide)n-3'-hydroxyl + 5'-phospho-(deoxyribonucleotide)m = (deoxyribonucleotide)n+m + AMP + beta-nicotinamide D-nucleotide.. In terms of biological role, DNA ligase that catalyzes the formation of phosphodiester linkages between 5'-phosphoryl and 3'-hydroxyl groups in double-stranded DNA using NAD as a coenzyme and as the energy source for the reaction. It is essential for DNA replication and repair of damaged DNA. This chain is DNA ligase, found in Synechocystis sp. (strain ATCC 27184 / PCC 6803 / Kazusa).